The sequence spans 281 residues: Probable replication-associated protein repA1 (281 aa).

It belongs to the IncFII RepA family.

This protein is essential for plasmid replication; it is involved in copy control functions. This is Probable replication-associated protein repA1 (repA1) from Buchnera aphidicola subsp. Cinara cedri (strain Cc).